Reading from the N-terminus, the 68-residue chain is Small ribosomal subunit protein bS21 (68 aa).

This sequence belongs to the bacterial ribosomal protein bS21 family.

This chain is Small ribosomal subunit protein bS21, found in Jannaschia sp. (strain CCS1).